The primary structure comprises 736 residues: Gephyrin (736 aa).

An MPT Mo-transferase region spans residues 14–153 (QIRVGVLTVS…LPGSKKGSQE (140 aa)). Disordered regions lie at residues 181 to 232 (DELE…DSSS) and 260 to 290 (TASL…PKVQ). Positions 187–199 (PSPPPPLSPPPTT) are enriched in pro residues. A compositionally biased stretch (polar residues) spans 261 to 290 (ASLSTTPSESPRAQATSRLSTASCPTPKVQ). The tract at residues 294–736 (SSKENILRAS…VVDVMVIGRL (443 aa)) is MPT adenylyltransferase.

It in the N-terminal section; belongs to the MoaB/Mog family. This sequence in the C-terminal section; belongs to the MoeA family. Homotrimer, homodimer and homooligomer. Interacts with glycine receptors. Mg(2+) is required as a cofactor.

The protein resides in the postsynaptic cell membrane. It is found in the cell membrane. The protein localises to the cytoplasm. It localises to the cytosol. Its subcellular location is the cytoskeleton. The protein resides in the cell projection. It is found in the dendrite. The protein localises to the postsynaptic density. The enzyme catalyses molybdopterin + ATP + H(+) = adenylyl-molybdopterin + diphosphate. It carries out the reaction adenylyl-molybdopterin + molybdate = Mo-molybdopterin + AMP + H(+). The protein operates within cofactor biosynthesis; molybdopterin biosynthesis. Functionally, microtubule-associated protein involved in membrane protein-cytoskeleton interactions. It is thought to anchor the inhibitory glycine receptor (GLYR) to subsynaptic microtubules. Acts as a major instructive molecule at inhibitory synapses, where it also clusters GABA type A receptors. Its function is as follows. Also has a catalytic activity and catalyzes two steps in the biosynthesis of the molybdenum cofactor. In the first step, molybdopterin is adenylated. Subsequently, molybdate is inserted into adenylated molybdopterin and AMP is released. This Gallus gallus (Chicken) protein is Gephyrin (GPHN).